Consider the following 500-residue polypeptide: Lysine--tRNA ligase (500 aa).

Positions 410 and 417 each coordinate Mg(2+).

The protein belongs to the class-II aminoacyl-tRNA synthetase family. Homodimer. Requires Mg(2+) as cofactor.

The protein resides in the cytoplasm. The catalysed reaction is tRNA(Lys) + L-lysine + ATP = L-lysyl-tRNA(Lys) + AMP + diphosphate. The chain is Lysine--tRNA ligase from Shewanella amazonensis (strain ATCC BAA-1098 / SB2B).